The primary structure comprises 331 residues: Tetraacyldisaccharide 4'-kinase (331 aa).

ATP is bound at residue 57–64 (SVGGNGKT).

This sequence belongs to the LpxK family.

It catalyses the reaction a lipid A disaccharide + ATP = a lipid IVA + ADP + H(+). Its pathway is glycolipid biosynthesis; lipid IV(A) biosynthesis; lipid IV(A) from (3R)-3-hydroxytetradecanoyl-[acyl-carrier-protein] and UDP-N-acetyl-alpha-D-glucosamine: step 6/6. Its function is as follows. Transfers the gamma-phosphate of ATP to the 4'-position of a tetraacyldisaccharide 1-phosphate intermediate (termed DS-1-P) to form tetraacyldisaccharide 1,4'-bis-phosphate (lipid IVA). This Histophilus somni (strain 2336) (Haemophilus somnus) protein is Tetraacyldisaccharide 4'-kinase.